The primary structure comprises 200 residues: NAD(P)H dehydrogenase (quinone) (200 aa).

Positions leucine 4–valine 191 constitute a Flavodoxin-like domain. Residues serine 10–valine 15 and threonine 79–phenylalanine 81 each bind FMN. Position 12 (tyrosine 12) interacts with NAD(+). Tryptophan 99 serves as a coordination point for substrate. FMN-binding positions include serine 114–glycine 120 and histidine 135.

The protein belongs to the WrbA family. The cofactor is FMN.

It carries out the reaction a quinone + NADH + H(+) = a quinol + NAD(+). It catalyses the reaction a quinone + NADPH + H(+) = a quinol + NADP(+). The sequence is that of NAD(P)H dehydrogenase (quinone) from Nitrosococcus oceani (strain ATCC 19707 / BCRC 17464 / JCM 30415 / NCIMB 11848 / C-107).